Here is a 72-residue protein sequence, read N- to C-terminus: Large ribosomal subunit protein uL29 (72 aa).

It belongs to the universal ribosomal protein uL29 family.

This chain is Large ribosomal subunit protein uL29, found in Microcystis aeruginosa (strain NIES-843 / IAM M-2473).